We begin with the raw amino-acid sequence, 278 residues long: MGLRLYKPYTASTRNRSVSDFSEITEKKPEKTLTSWVFRSKGRNNRGIITSRHLGGGHKRLYRLIDFKRQKIGILGKVATIEYDPNRNARIVLLHYQDGAKGYILHPRGLKVGGTVVTSPEAPILIGNCLPLKAIPLGTEVHNVELYSGMGGQLSRAAGSSAQIVAKEGRFVTLRLPSGEVRLVSQNCWATIGQVGNVDANNIRIGKAGRMRWLGRRPKVRGVVMNPNDHPHGGGEGRSPIGRKCPVSLWGRLALGERTRKSKKYSNKLILKRRKASK.

Positions 222–241 (GVVMNPNDHPHGGGEGRSPI) are disordered.

The protein belongs to the universal ribosomal protein uL2 family. As to quaternary structure, part of the 50S ribosomal subunit.

The protein resides in the plastid. Its subcellular location is the chloroplast. This is Large ribosomal subunit protein uL2c (rpl2) from Tupiella akineta (Green alga).